A 1700-amino-acid chain; its full sequence is Ras-responsive element-binding protein 1 (1700 aa).

The tract at residues 31–63 (TENGGSPQGIKSPMKPPGPNRIGRRNQETKEEK) is disordered. A phosphoserine mark is found at serine 36 and serine 42. C2H2-type zinc fingers lie at residues 66–88 (YNCPLCEKICTTQHQLTMHIRQH), 97–119 (HACSICGKSLSSASSLDRHMLVH), and 125–147 (YKCTVCGQSFTTNGNMHRHMKIH). Positions 146-195 (IHEKDTNSTTAAAPPSPLKRRRLSSKRKLSHDAESEDPGPAKKMVEDGQS) are disordered. A Phosphoserine modification is found at serine 161. The span at 163–174 (LKRRRLSSKRKL) shows a compositional bias: basic residues. Phosphoserine occurs at positions 175 and 180. Positions 184–195 (GPAKKMVEDGQS) are enriched in basic and acidic residues. The C2H2-type 4 zinc-finger motif lies at 206–228 (FHCPVCFKEFVCKYELETHMETH). Position 229 is a phosphoserine (serine 229). 2 C2H2-type zinc fingers span residues 233–256 (LRCDICCVTFRTHRGLLRHNALVH) and 314–336 (FVCDTCDKAFPMLSSLILHRQSH). Glycyl lysine isopeptide (Lys-Gly) (interchain with G-Cter in SUMO2) cross-links involve residues lysine 433, lysine 500, lysine 549, lysine 564, lysine 591, and lysine 611. Residue lysine 613 forms a Glycyl lysine isopeptide (Lys-Gly) (interchain with G-Cter in SUMO1); alternate linkage. A Glycyl lysine isopeptide (Lys-Gly) (interchain with G-Cter in SUMO2); alternate cross-link involves residue lysine 613. A Glycyl lysine isopeptide (Lys-Gly) (interchain with G-Cter in SUMO2) cross-link involves residue lysine 622. 5 consecutive C2H2-type zinc fingers follow at residues 641-663 (YPCRFCNQVFAFSGVLRAHVRSH), 669-691 (YQCNICDYIAADKAALIRHIRTH), 697-720 (YICKICHYPFTVKANCERHLRKKH), 751-782 (TVCRLCGEDLKHYRALRIHMRTHCSRGLGGCH), and 788-813 (FECKECNAPFVAKRNCIHHILKQHLH). Glycyl lysine isopeptide (Lys-Gly) (interchain with G-Cter in SUMO2) cross-links involve residues lysine 855, lysine 883, and lysine 911. Disordered regions lie at residues 939-991 (IPKS…SLET) and 1092-1177 (ADPG…AVDL). Positions 944 to 961 (KKGDKDTVVPSDAKKPEP) are enriched in basic and acidic residues. The residue at position 970 (serine 970) is a Phosphoserine. Residues 1097-1111 (SITSSNTVATDSPGS) are compositionally biased toward polar residues. 3 positions are modified to phosphoserine: serine 1125, serine 1137, and serine 1138. The span at 1137–1146 (SSPEEALPTE) shows a compositional bias: low complexity. Basic residues predominate over residues 1155–1165 (SRKRGRKRGLR). A phosphoserine mark is found at serine 1172, serine 1179, serine 1180, and serine 1230. 4 disordered regions span residues 1195–1235 (TNKF…AEDR), 1273–1368 (HTDS…QSLD), 1383–1521 (SEAG…RKKV), and 1564–1670 (VRHQ…SPAA). The C2H2-type 12 zinc-finger motif lies at 1251–1273 (INCPHCPRVFPWASSLQRHMLTH). The span at 1273-1285 (HTDSQSDTDTLTT) shows a compositional bias: low complexity. Acidic residues predominate over residues 1327-1346 (SEEEEEKETEENPEPEEECR). The C2H2-type 13 zinc-finger motif lies at 1400 to 1422 (HACDTCGKNFKFLGTLSRHKKAH). Serine 1450 and serine 1452 each carry phosphoserine. The segment covering 1492–1507 (TAEKRGDGDKRPKTDS) has biased composition (basic and acidic residues). 2 C2H2-type zinc fingers span residues 1520 to 1542 (KVCSVCNKRFWSLQDLTRHMRSH) and 1548 to 1570 (YKCQTCERTFTLKHSLVRHQRIH). Over residues 1564 to 1580 (VRHQRIHQKARHSKHHG) the composition is skewed to basic residues. 2 positions are modified to phosphoserine: serine 1593 and serine 1606. Residues 1645 to 1660 (AEQAAEPSAPKEQASP) are compositionally biased toward low complexity. Serine 1667 is modified (phosphoserine).

This sequence belongs to the krueppel C2H2-type zinc-finger protein family. As to quaternary structure, interacts with NEUROD1. Interacts with AR. Expressed in splenic B-cells.

It is found in the nucleus speckle. Its function is as follows. Transcription factor that binds specifically to the RAS-responsive elements (RRE) of gene promoters. Represses the angiotensinogen gene. Negatively regulates the transcriptional activity of AR. Potentiates the transcriptional activity of NEUROD1. Binds specifically to the allelic variant of the CDKN2A promoter present in Balb/c mice, which leads to a down-regulation of CDKN2A expression in this strain, and, as a consequence, to an elevated susceptibility to pristane-induced tumors. Promotes brown adipocyte differentiation. May be involved in Ras/Raf-mediated cell differentiation by enhancing calcitonin expression. This is Ras-responsive element-binding protein 1 (Rreb1) from Mus musculus (Mouse).